Reading from the N-terminus, the 166-residue chain is Large ribosomal subunit protein uL10 (166 aa).

It belongs to the universal ribosomal protein uL10 family. Part of the ribosomal stalk of the 50S ribosomal subunit. The N-terminus interacts with L11 and the large rRNA to form the base of the stalk. The C-terminus forms an elongated spine to which L12 dimers bind in a sequential fashion forming a multimeric L10(L12)X complex.

Its function is as follows. Forms part of the ribosomal stalk, playing a central role in the interaction of the ribosome with GTP-bound translation factors. The sequence is that of Large ribosomal subunit protein uL10 from Listeria monocytogenes serotype 4b (strain CLIP80459).